We begin with the raw amino-acid sequence, 522 residues long: Maturase K (522 aa).

Belongs to the intron maturase 2 family. MatK subfamily.

The protein resides in the plastid. Its subcellular location is the chloroplast. Functionally, usually encoded in the trnK tRNA gene intron. Probably assists in splicing its own and other chloroplast group II introns. This is Maturase K from Iris domestica (Leopard lily).